The primary structure comprises 325 residues: ADP-ribose glycohydrolase MACROD1 (325 aa).

The tract at residues 21–55 (LGAPRPWPGPSPGATRTRSSACGPPASLSAHHPRA) is disordered. An N6-succinyllysine mark is found at Lys96, Lys103, and Lys129. Lys138 is covalently cross-linked (Glycyl lysine isopeptide (Lys-Gly) (interchain with G-Cter in SUMO2)). The Macro domain maps to 141–322 (EPKYKKDKQL…IYRERLPHYF (182 aa)). Substrate is bound at residue 159–161 (GDI). Lys163 is modified (N6-acetyllysine). Residues 172 to 174 (AAN), 179 to 184 (GGGGVD), 267 to 273 (ISTGVFG), and Phe306 each bind substrate.

This sequence belongs to the MacroD-type family. MacroD1/2-like subfamily. In terms of assembly, interacts with ESR1; Interacts in a manner that is estrogen independent but is enhanced by estrogen. Interacts (via macro domain) with AR.

It localises to the nucleus. The catalysed reaction is 3''-O-acetyl-ADP-D-ribose + H2O = ADP-D-ribose + acetate + H(+). The enzyme catalyses 2''-O-acetyl-ADP-D-ribose + H2O = ADP-D-ribose + acetate + H(+). It catalyses the reaction 4-O-(ADP-D-ribosyl)-L-aspartyl-[protein] + H2O = L-aspartyl-[protein] + ADP-D-ribose + H(+). It carries out the reaction 5-O-(ADP-D-ribosyl)-L-glutamyl-[protein] + H2O = L-glutamyl-[protein] + ADP-D-ribose + H(+). The catalysed reaction is alpha-NAD(+) + H2O = ADP-D-ribose + nicotinamide + H(+). With respect to regulation, subject to competitive inhibition by the product ADP-ribose. Its function is as follows. Removes ADP-ribose from aspartate and glutamate residues in proteins bearing a single ADP-ribose moiety. Inactive towards proteins bearing poly-ADP-ribose. Deacetylates O-acetyl-ADP ribose, a signaling molecule generated by the deacetylation of acetylated lysine residues in histones and other proteins. Plays a role in estrogen signaling. Binds to androgen receptor (AR) and amplifies the transactivation function of AR in response to androgen. May play an important role in carcinogenesis and/or progression of hormone-dependent cancers by feed-forward mechanism that activates ESR1 transactivation. Could be an ESR1 coactivator, providing a positive feedback regulatory loop for ESR1 signal transduction. Could be involved in invasive growth by down-regulating CDH1 in endometrial cancer cells. Enhances ESR1-mediated transcription activity. The protein is ADP-ribose glycohydrolase MACROD1 (MACROD1) of Bos taurus (Bovine).